The chain runs to 294 residues: ATP synthase gamma chain (294 aa).

It belongs to the ATPase gamma chain family. F-type ATPases have 2 components, CF(1) - the catalytic core - and CF(0) - the membrane proton channel. CF(1) has five subunits: alpha(3), beta(3), gamma(1), delta(1), epsilon(1). CF(0) has three main subunits: a, b and c.

It localises to the cell inner membrane. Produces ATP from ADP in the presence of a proton gradient across the membrane. The gamma chain is believed to be important in regulating ATPase activity and the flow of protons through the CF(0) complex. The sequence is that of ATP synthase gamma chain from Nitrosomonas eutropha (strain DSM 101675 / C91 / Nm57).